Here is a 423-residue protein sequence, read N- to C-terminus: Histone deacetylase 14, chloroplastic (423 aa).

A chloroplast-targeting transit peptide spans 1-44; sequence MSMALIVRPFFVPGSAGISGSRNICKKNQWRKYLLKPSGSSINC. The segment at 62–392 is histone deacetylase; it reads DARLIYSVSA…FRALLGEDSL (331 aa). Histidine 202 (proton donor/acceptor) is an active-site residue. Residues aspartate 239, histidine 241, and aspartate 326 each contribute to the Zn(2+) site.

This sequence belongs to the histone deacetylase family. Interacts with PP2A2. It depends on Zn(2+) as a cofactor. Expressed in stems, leaves, flowers, siliques and mature seeds.

The protein resides in the nucleus. The protein localises to the cytoplasm. It localises to the plastid. It is found in the chloroplast stroma. Its subcellular location is the mitochondrion. It carries out the reaction N-acetylserotonin + H2O = serotonin + acetate. The enzyme catalyses N-acetyltyramine + H2O = tyramine + acetate. The catalysed reaction is N-acetyltryptamine + H2O = tryptamine + acetate. It catalyses the reaction melatonin + H2O = 5-methoxytryptamine + acetate. Its activity is inhibited by trichostatin A (TSA), a known histone deacetylase inhibitor. Functionally, regulates lysine acetylation levels of plastid proteins related to photosynthesis. Involved in the regulation of the activation state of RuBisCO, which is controlled by lysine acetylation of RuBisCO activase under low-light conditions. Associates with alpha- and beta-tubulins and deacetylate alpha-tubulin. Does not seem to be required for the cellular patterning in the root epidermis. Involved in the regulation of melatonin biosynthesis by catalyzing the deacetylation of N-acetylserotonin to produce serotonin. N-acetylserotonin is methylated by acetylserotonin O-methyltransferase (ASMT) to produce melatonin (N-acetyl-5-methoxytryptamine). Deacetylates melatonin to produce 5-methoxytryptamine. In vitro, deacetylates N-acetyltyramine and N-acetyltryptamine to produce tyramine and tryptamine, respectively. This chain is Histone deacetylase 14, chloroplastic, found in Arabidopsis thaliana (Mouse-ear cress).